The following is a 357-amino-acid chain: Nicotinate-nucleotide--dimethylbenzimidazole phosphoribosyltransferase (357 aa).

Glutamate 323 functions as the Proton acceptor in the catalytic mechanism.

Belongs to the CobT family.

It carries out the reaction 5,6-dimethylbenzimidazole + nicotinate beta-D-ribonucleotide = alpha-ribazole 5'-phosphate + nicotinate + H(+). Its pathway is nucleoside biosynthesis; alpha-ribazole biosynthesis; alpha-ribazole from 5,6-dimethylbenzimidazole: step 1/2. In terms of biological role, catalyzes the synthesis of alpha-ribazole-5'-phosphate from nicotinate mononucleotide (NAMN) and 5,6-dimethylbenzimidazole (DMB). The protein is Nicotinate-nucleotide--dimethylbenzimidazole phosphoribosyltransferase of Nitratidesulfovibrio vulgaris (strain DP4) (Desulfovibrio vulgaris).